The primary structure comprises 350 residues: Protein RecA (350 aa).

ATP is bound at residue 67-74 (GPESSGKT).

This sequence belongs to the RecA family.

The protein localises to the cytoplasm. Functionally, can catalyze the hydrolysis of ATP in the presence of single-stranded DNA, the ATP-dependent uptake of single-stranded DNA by duplex DNA, and the ATP-dependent hybridization of homologous single-stranded DNAs. It interacts with LexA causing its activation and leading to its autocatalytic cleavage. The sequence is that of Protein RecA from Chromobacterium violaceum (strain ATCC 12472 / DSM 30191 / JCM 1249 / CCUG 213 / NBRC 12614 / NCIMB 9131 / NCTC 9757 / MK).